A 250-amino-acid polypeptide reads, in one-letter code: MSEQYPVLSGAEPFYAENGPVGVLLVHGFTGTPHSMRPLAEAYAKAGYTVCLPRLKGHGTHYEDMERTTFHDWVASVEEGYGWLKQRCQTIFVTGLSMGGTLTLYLAEHHPDICGIVPINAAVDIPAIAAGMTGGGELPRYLDSIGSDLKNPDVKELAYEKTPTASLLQLARLMAQTKAKLDRIVCPALIFVSDEDHVVPPGNADIIFQGISSTEKEIVRLRNSYHVATLDYDQPMIIERSLEFFAKHAG.

Position 29 (F29) interacts with substrate. The active-site Nucleophile is S97. Residue M98 coordinates substrate. Catalysis depends on charge relay system residues D196 and H226.

It belongs to the lipase/esterase LIP3/BchO family. Monomer.

It catalyses the reaction Hydrolyzes glycerol monoesters of long-chain fatty acids.. Not inhibited by cholate, but slightly inhibited by triton X-100 and deoxycholate. Completely inhibited by PMSF (phenylmethylsulfonyl fluoride) at a concentration of 200 uM. Functionally, hydrolyzes monoacylglycerols, with the highest activity occurring with 1-monolauroylglycerol. The sequence is that of Thermostable monoacylglycerol lipase from Bacillus sp. (strain H-257).